The chain runs to 334 residues: Fructose-1,6-bisphosphatase class 1 (334 aa).

4 residues coordinate Mg(2+): Glu89, Asp112, Leu114, and Asp115. Residues 115–118, Asn208, Tyr241, and Lys271 each bind substrate; that span reads DGSS. Residue Glu277 participates in Mg(2+) binding.

This sequence belongs to the FBPase class 1 family. Homotetramer. Requires Mg(2+) as cofactor.

Its subcellular location is the cytoplasm. The enzyme catalyses beta-D-fructose 1,6-bisphosphate + H2O = beta-D-fructose 6-phosphate + phosphate. It participates in carbohydrate biosynthesis; gluconeogenesis. The polypeptide is Fructose-1,6-bisphosphatase class 1 (Photorhabdus laumondii subsp. laumondii (strain DSM 15139 / CIP 105565 / TT01) (Photorhabdus luminescens subsp. laumondii)).